Consider the following 261-residue polypeptide: uncharacterized protein (261 aa).

An N-terminal signal peptide occupies residues Met-1–Gly-22. Cys-23 carries N-palmitoyl cysteine lipidation. The S-diacylglycerol cysteine moiety is linked to residue Cys-23.

It belongs to the staphylococcal tandem lipoprotein family.

The protein localises to the cell membrane. This is an uncharacterized protein from Staphylococcus aureus (strain N315).